Here is a 1233-residue protein sequence, read N- to C-terminus: MAIDVNKFESMQIGLASPAKIREWSYGEVKKPETINYRTLKAERDGLFDERIFGPIKDYECACGKYKRIRYKGIVCDRCGVEVTSSKVRRERMGHIELAAPVTHIWYFKGIPSRMGLILDMSPRSLEEIIYFASYVVINPGNTPLEKKQLITEAEYRQYQDQYGTDTFDAKMGAEAIKELLAEVDLEKQAKELKNELKDATGQKRTRAVRRLDIVEAFIQSGNKPEWMVMDVVPVIPPDLRPMVQLEGGRFATSDLNDLYRRVINRNNRLKRLLDLNAPGIIVQNEKRMLQEAVDALIDNGRRGRPVSGPGNRPLKSLSHLLKGKQGRFRQNLLGKRVDYSGRSVIDVGPFLKMNQMGLPRQMAVELFKPFIYNRLIELGTENGGANNLRSARCLVERHEDVVQDVLEEVVKEHPVLLNRAPTLHRLGIQAFEPVLVSGKAMRLHPLVTTAYNADFDGDQMAIHVPLSDEAQAEARLLMLAASHILAPKDGKPIVAPSQDMTIGNYYLTTEEAGIKGEGMIFSSADEVKMALQNHEVELHTRIGIAASSFDKAKPFTDHQRARIMVTTVGKVIFNEILPDDFPYINEPKSENFNGIDDRFFLDPGTDIVGWFKNESLNGPFKSGFLSDIIAQIYARYQVTRTSVLLDDMKDLGYDISTRSGLTVAMSDVTELPEKGEVLKEAHEKVAKITKQFRRGLLTDDERYIQVTQTWSDAQDKIKSMLIASFDSKNPIFMMSDSGARGNISNFVQLAGMRGLMAAPNGKVIELPVTANFREGLSVLEMFISTHGARKGMTDTALKTANSGYLTRRLVDVAQEVIVREEDCGTDRGLDVSAIMDGNEVIEPLYDRILGRYAMKPVIDPKTGEVIAKKNQMIDEHVADQIIDAGIQTVTIRSIFTCRTEHGVCVKCYGRNMATGDIVEVGEAVGTVAAQSIGEPGTQLTMRTFHTGGVALSEDITQGLPRVQEIFEARNPKGRAEISEVTGKVTSIEENPADRTKTVTIEGETDTREYVLPISARLRVAEGDEIHRSEAINEGPLDPKELIKVSSTLKTENYMLAEVQKVYRMQGVGIADKHVEVMVRQMLRKVRVMDPGQTDLLPGELLDIADFRRANAKTILSGQTAATSRPVLLGITKASLETNSFLSAASFQETTRVLTDAAIRGKNDPLVGLKENVIIGKVIPAGTGVAEYRHIKDEVVAAPVEPLEKIPTLDELQKAFDKEPASSTGNKASNSAK.

C61, C63, C76, and C79 together coordinate Zn(2+). Residues D455, D457, and D459 each coordinate Mg(2+). C824, C898, C905, and C908 together coordinate Zn(2+). Basic and acidic residues predominate over residues 1211–1220 (ELQKAFDKEP). The segment at 1211–1233 (ELQKAFDKEPASSTGNKASNSAK) is disordered. The span at 1221–1233 (ASSTGNKASNSAK) shows a compositional bias: polar residues.

This sequence belongs to the RNA polymerase beta' chain family. As to quaternary structure, the RNAP catalytic core consists of 2 alpha, 1 beta, 1 beta' and 1 omega subunit. When a sigma factor is associated with the core the holoenzyme is formed, which can initiate transcription. The cofactor is Mg(2+). Zn(2+) is required as a cofactor.

It carries out the reaction RNA(n) + a ribonucleoside 5'-triphosphate = RNA(n+1) + diphosphate. Its function is as follows. DNA-dependent RNA polymerase catalyzes the transcription of DNA into RNA using the four ribonucleoside triphosphates as substrates. This is DNA-directed RNA polymerase subunit beta' from Oenococcus oeni (strain ATCC BAA-331 / PSU-1).